Reading from the N-terminus, the 108-residue chain is UPF0102 protein WS0451 (108 aa).

Belongs to the UPF0102 family.

The sequence is that of UPF0102 protein WS0451 from Wolinella succinogenes (strain ATCC 29543 / DSM 1740 / CCUG 13145 / JCM 31913 / LMG 7466 / NCTC 11488 / FDC 602W) (Vibrio succinogenes).